The following is a 240-amino-acid chain: Putative tyrosine phosphatase 067L (240 aa).

The Tyrosine-protein phosphatase domain occupies 3–151; that stretch reads QASFFVADKA…EREWPLNPTQ (149 aa). Cys96 (phosphocysteine intermediate) is an active-site residue.

Belongs to the protein-tyrosine phosphatase family.

The enzyme catalyses O-phospho-L-tyrosyl-[protein] + H2O = L-tyrosyl-[protein] + phosphate. In Aedes vexans (Inland floodwater mosquito), this protein is Putative tyrosine phosphatase 067L.